Reading from the N-terminus, the 554-residue chain is Hydroxylamine reductase (554 aa).

4 residues coordinate [2Fe-2S] cluster: Cys-3, Cys-6, Cys-18, and Cys-25. The hybrid [4Fe-2O-2S] cluster site is built by His-252, Glu-276, Cys-320, Cys-408, Cys-436, Cys-461, Glu-495, and Lys-497. Position 408 is a cysteine persulfide (Cys-408).

The protein belongs to the HCP family. It depends on [2Fe-2S] cluster as a cofactor. Hybrid [4Fe-2O-2S] cluster serves as cofactor.

Its subcellular location is the cytoplasm. It catalyses the reaction A + NH4(+) + H2O = hydroxylamine + AH2 + H(+). In terms of biological role, catalyzes the reduction of hydroxylamine to form NH(3) and H(2)O. In Shewanella putrefaciens (strain CN-32 / ATCC BAA-453), this protein is Hydroxylamine reductase.